The primary structure comprises 963 residues: Glycine dehydrogenase (decarboxylating) (963 aa).

At K707 the chain carries N6-(pyridoxal phosphate)lysine.

This sequence belongs to the GcvP family. As to quaternary structure, the glycine cleavage system is composed of four proteins: P, T, L and H. Pyridoxal 5'-phosphate is required as a cofactor.

The catalysed reaction is N(6)-[(R)-lipoyl]-L-lysyl-[glycine-cleavage complex H protein] + glycine + H(+) = N(6)-[(R)-S(8)-aminomethyldihydrolipoyl]-L-lysyl-[glycine-cleavage complex H protein] + CO2. In terms of biological role, the glycine cleavage system catalyzes the degradation of glycine. The P protein binds the alpha-amino group of glycine through its pyridoxal phosphate cofactor; CO(2) is released and the remaining methylamine moiety is then transferred to the lipoamide cofactor of the H protein. In Dechloromonas aromatica (strain RCB), this protein is Glycine dehydrogenase (decarboxylating).